The primary structure comprises 338 residues: D-erythrose-4-phosphate dehydrogenase (338 aa).

Residue 11-12 (RI) coordinates NAD(+). Substrate contacts are provided by residues 153–155 (SCT), R199, 212–213 (TK), and R235. C154 (nucleophile) is an active-site residue. Position 317 (N317) interacts with NAD(+).

Belongs to the glyceraldehyde-3-phosphate dehydrogenase family. Epd subfamily. As to quaternary structure, homotetramer.

It localises to the cytoplasm. It carries out the reaction D-erythrose 4-phosphate + NAD(+) + H2O = 4-phospho-D-erythronate + NADH + 2 H(+). The protein operates within cofactor biosynthesis; pyridoxine 5'-phosphate biosynthesis; pyridoxine 5'-phosphate from D-erythrose 4-phosphate: step 1/5. Functionally, catalyzes the NAD-dependent conversion of D-erythrose 4-phosphate to 4-phosphoerythronate. The protein is D-erythrose-4-phosphate dehydrogenase of Shewanella oneidensis (strain ATCC 700550 / JCM 31522 / CIP 106686 / LMG 19005 / NCIMB 14063 / MR-1).